Here is a 307-residue protein sequence, read N- to C-terminus: Elongation factor Ts, mitochondrial (307 aa).

The transit peptide at 1-19 (MIFTRLTRFVGHGTGLRLY) directs the protein to the mitochondrion.

It belongs to the EF-Ts family.

The protein localises to the mitochondrion. Functionally, associates with the EF-Tu.GDP complex and induces the exchange of GDP to GTP. It remains bound to the aminoacyl-tRNA.EF-Tu.GTP complex up to the GTP hydrolysis stage on the ribosome. This is Elongation factor Ts, mitochondrial from Aedes aegypti (Yellowfever mosquito).